The chain runs to 105 residues: Flagellar transcriptional regulator FlhD (105 aa).

Belongs to the FlhD family. In terms of assembly, homodimer; disulfide-linked. Forms a heterohexamer composed of two FlhC and four FlhD subunits. Each FlhC binds a FlhD dimer, forming a heterotrimer, and a hexamer assembles by dimerization of two heterotrimers.

It localises to the cytoplasm. In terms of biological role, functions in complex with FlhC as a master transcriptional regulator that regulates transcription of several flagellar and non-flagellar operons by binding to their promoter region. Activates expression of class 2 flagellar genes, including fliA, which is a flagellum-specific sigma factor that turns on the class 3 genes. Also regulates genes whose products function in a variety of physiological pathways. The protein is Flagellar transcriptional regulator FlhD of Cupriavidus pinatubonensis (strain JMP 134 / LMG 1197) (Cupriavidus necator (strain JMP 134)).